The sequence spans 300 residues: Protoheme IX farnesyltransferase (300 aa).

A run of 9 helical transmembrane segments spans residues 31-51, 52-72, 92-112, 123-145, 152-172, 179-199, 225-245, 247-267, and 280-300; these read VMSL…NSLH, PFIS…AGAI, IVRG…MAFF, FLSA…MWLK, IVIG…SVSG, VILF…LALF, ILIY…VGMS, IIYL…SISL, and FFAY…FCRV.

It belongs to the UbiA prenyltransferase family. Protoheme IX farnesyltransferase subfamily.

The protein resides in the cell inner membrane. The catalysed reaction is heme b + (2E,6E)-farnesyl diphosphate + H2O = Fe(II)-heme o + diphosphate. Its pathway is porphyrin-containing compound metabolism; heme O biosynthesis; heme O from protoheme: step 1/1. Its function is as follows. Converts heme B (protoheme IX) to heme O by substitution of the vinyl group on carbon 2 of heme B porphyrin ring with a hydroxyethyl farnesyl side group. This is Protoheme IX farnesyltransferase from Rickettsia bellii (strain OSU 85-389).